We begin with the raw amino-acid sequence, 136 residues long: 5-hydroxyisourate hydrolase (136 aa).

A signal peptide spans 1 to 20; sequence MKRYILATVIASLVAAPAMA. Residues His-31, Arg-69, and Tyr-133 each contribute to the substrate site.

This sequence belongs to the transthyretin family. 5-hydroxyisourate hydrolase subfamily. As to quaternary structure, homotetramer.

Its subcellular location is the periplasm. It catalyses the reaction 5-hydroxyisourate + H2O = 5-hydroxy-2-oxo-4-ureido-2,5-dihydro-1H-imidazole-5-carboxylate + H(+). In terms of biological role, catalyzes the hydrolysis of 5-hydroxyisourate (HIU) to 2-oxo-4-hydroxy-4-carboxy-5-ureidoimidazoline (OHCU). The chain is 5-hydroxyisourate hydrolase (hiuH) from Salmonella typhimurium (strain LT2 / SGSC1412 / ATCC 700720).